A 157-amino-acid polypeptide reads, in one-letter code: Class-10 pathogenesis-related protein 1 (157 aa).

It belongs to the BetVI family. Expressed in roots. Detected in nodules and leaves, but not in stems and flowers.

This Medicago truncatula (Barrel medic) protein is Class-10 pathogenesis-related protein 1 (PR10-1).